We begin with the raw amino-acid sequence, 165 residues long: Hydroxyproline-rich systemin A (165 aa).

An N-terminal signal peptide occupies residues Met-1–Ala-18. Positions Arg-19–Gly-35 are excised as a propeptide. Disordered stretches follow at residues Gly-33–Asn-70 and Tyr-142–Tyr-165. Pro-42, Pro-43, Pro-45, Pro-49, and Pro-50 each carry 4-hydroxyproline. Pro-42, Pro-43, Pro-45, Pro-49, and Pro-50 each carry an O-linked (Ara...) hydroxyproline glycan. Residues Val-54–Trp-143 constitute a propeptide that is removed on maturation. Residues Pro-150, Pro-151, and Pro-153 each carry the 4-hydroxyproline modification. O-linked (Ara...) hydroxyproline glycosylation is found at Pro-150, Pro-151, and Pro-153. Residues Leu-162 to Tyr-165 constitute a propeptide that is removed on maturation.

Post-translationally, O-glycosylated; contains pentose side chains. Expressed in leaves.

Its subcellular location is the secreted. Activates a lipid-based signal transduction pathway in which linolenic acid is converted to jasmonic acid, a potent activator of defense gene transcription, including proteinase inhibitors. The protein is Hydroxyproline-rich systemin A of Nicotiana tabacum (Common tobacco).